Here is a 346-residue protein sequence, read N- to C-terminus: S-adenosylmethionine:tRNA ribosyltransferase-isomerase (346 aa).

The protein belongs to the QueA family. As to quaternary structure, monomer.

It localises to the cytoplasm. It carries out the reaction 7-aminomethyl-7-carbaguanosine(34) in tRNA + S-adenosyl-L-methionine = epoxyqueuosine(34) in tRNA + adenine + L-methionine + 2 H(+). The protein operates within tRNA modification; tRNA-queuosine biosynthesis. Functionally, transfers and isomerizes the ribose moiety from AdoMet to the 7-aminomethyl group of 7-deazaguanine (preQ1-tRNA) to give epoxyqueuosine (oQ-tRNA). This chain is S-adenosylmethionine:tRNA ribosyltransferase-isomerase, found in Shewanella denitrificans (strain OS217 / ATCC BAA-1090 / DSM 15013).